A 147-amino-acid chain; its full sequence is Lipoprotein signal peptidase (147 aa).

Helical transmembrane passes span 10-30 (ISIFLILLIDQITKYLAIKFL), 34-54 (GIVKLLPFLNLVYVENTGTAF), 59-79 (FLGSGFFIIIALVVTGFLVYM), and 87-107 (WFIYSLIIAGALGNIIDRLIY). Catalysis depends on residues Asp-112 and Asp-130. Residues 121–141 (LHWPAFNVADSAISIGIVLFV) traverse the membrane as a helical segment.

This sequence belongs to the peptidase A8 family.

The protein resides in the cell inner membrane. It catalyses the reaction Release of signal peptides from bacterial membrane prolipoproteins. Hydrolyzes -Xaa-Yaa-Zaa-|-(S,diacylglyceryl)Cys-, in which Xaa is hydrophobic (preferably Leu), and Yaa (Ala or Ser) and Zaa (Gly or Ala) have small, neutral side chains.. The protein operates within protein modification; lipoprotein biosynthesis (signal peptide cleavage). Its function is as follows. This protein specifically catalyzes the removal of signal peptides from prolipoproteins. This Thermodesulfovibrio yellowstonii (strain ATCC 51303 / DSM 11347 / YP87) protein is Lipoprotein signal peptidase.